A 641-amino-acid polypeptide reads, in one-letter code: Phosphomethylpyrimidine synthase (641 aa).

Residues N221, M250, Y279, H315, 335–337, 376–379, and E415 each bind substrate; these read SRG and DGLR. Residue H419 coordinates Zn(2+). Position 442 (Y442) interacts with substrate. H483 lines the Zn(2+) pocket. [4Fe-4S] cluster contacts are provided by C563, C566, and C571.

This sequence belongs to the ThiC family. Homodimer. [4Fe-4S] cluster is required as a cofactor.

It carries out the reaction 5-amino-1-(5-phospho-beta-D-ribosyl)imidazole + S-adenosyl-L-methionine = 4-amino-2-methyl-5-(phosphooxymethyl)pyrimidine + CO + 5'-deoxyadenosine + formate + L-methionine + 3 H(+). It functions in the pathway cofactor biosynthesis; thiamine diphosphate biosynthesis. In terms of biological role, catalyzes the synthesis of the hydroxymethylpyrimidine phosphate (HMP-P) moiety of thiamine from aminoimidazole ribotide (AIR) in a radical S-adenosyl-L-methionine (SAM)-dependent reaction. The protein is Phosphomethylpyrimidine synthase of Rhodopseudomonas palustris (strain TIE-1).